The chain runs to 188 residues: Translocon-associated protein subunit beta (188 aa).

An N-terminal signal peptide occupies residues 1–15; that stretch reads MKFSLFALLFVVVSC. The Lumenal portion of the chain corresponds to 16-151; the sequence is VDVGTQTRDA…EYDRRFAPKY (136 aa). Asn93 and Asn109 each carry an N-linked (GlcNAc...) asparagine glycan. The chain crosses the membrane as a helical span at residues 152–172; sequence TYFLVFFLIVAPTTLGSFLLF. Topologically, residues 173-188 are cytoplasmic; it reads QQSKARFPNVIKKKST.

Belongs to the TRAP-beta family. In terms of assembly, heterotetramer of TRAP-alpha, TRAP-beta, TRAP-delta and TRAP-gamma.

Its subcellular location is the endoplasmic reticulum membrane. Its function is as follows. TRAP proteins are part of a complex whose function is to bind calcium to the ER membrane and thereby regulate the retention of ER resident proteins. In Caenorhabditis elegans, this protein is Translocon-associated protein subunit beta.